The sequence spans 333 residues: N-acetyl-gamma-glutamyl-phosphate reductase (333 aa).

The active site involves cysteine 145.

The protein belongs to the NAGSA dehydrogenase family. Type 1 subfamily.

It is found in the cytoplasm. The catalysed reaction is N-acetyl-L-glutamate 5-semialdehyde + phosphate + NADP(+) = N-acetyl-L-glutamyl 5-phosphate + NADPH + H(+). The protein operates within amino-acid biosynthesis; L-arginine biosynthesis; N(2)-acetyl-L-ornithine from L-glutamate: step 3/4. Catalyzes the NADPH-dependent reduction of N-acetyl-5-glutamyl phosphate to yield N-acetyl-L-glutamate 5-semialdehyde. This Salinispora tropica (strain ATCC BAA-916 / DSM 44818 / JCM 13857 / NBRC 105044 / CNB-440) protein is N-acetyl-gamma-glutamyl-phosphate reductase.